A 227-amino-acid chain; its full sequence is Cytochrome c oxidase subunit 2 (227 aa).

The Mitochondrial intermembrane segment spans residues 1–14; sequence MAYPFQLGLQDATS. A helical transmembrane segment spans residues 15-45; sequence PIMEELMNFHDHTLMIVFLISSLVLYIISLM. The Mitochondrial matrix segment spans residues 46 to 59; sequence LTTKLTHTSTMDAQ. The helical transmembrane segment at 60–87 threads the bilayer; it reads EVETIWTILPAAILILIALPSLRILYMM. The Mitochondrial intermembrane segment spans residues 88–227; that stretch reads DEINNPALTV…YFENWSASMI (140 aa). Positions 161, 196, 198, 200, 204, and 207 each coordinate Cu cation. Glutamate 198 is a binding site for Mg(2+). Position 218 is a phosphotyrosine (tyrosine 218).

Belongs to the cytochrome c oxidase subunit 2 family. As to quaternary structure, component of the cytochrome c oxidase (complex IV, CIV), a multisubunit enzyme composed of 14 subunits. The complex is composed of a catalytic core of 3 subunits MT-CO1, MT-CO2 and MT-CO3, encoded in the mitochondrial DNA, and 11 supernumerary subunits COX4I, COX5A, COX5B, COX6A, COX6B, COX6C, COX7A, COX7B, COX7C, COX8 and NDUFA4, which are encoded in the nuclear genome. The complex exists as a monomer or a dimer and forms supercomplexes (SCs) in the inner mitochondrial membrane with NADH-ubiquinone oxidoreductase (complex I, CI) and ubiquinol-cytochrome c oxidoreductase (cytochrome b-c1 complex, complex III, CIII), resulting in different assemblies (supercomplex SCI(1)III(2)IV(1) and megacomplex MCI(2)III(2)IV(2)). Found in a complex with TMEM177, COA6, COX18, COX20, SCO1 and SCO2. Interacts with TMEM177 in a COX20-dependent manner. Interacts with COX20. Interacts with COX16. Cu cation is required as a cofactor.

The protein localises to the mitochondrion inner membrane. The catalysed reaction is 4 Fe(II)-[cytochrome c] + O2 + 8 H(+)(in) = 4 Fe(III)-[cytochrome c] + 2 H2O + 4 H(+)(out). In terms of biological role, component of the cytochrome c oxidase, the last enzyme in the mitochondrial electron transport chain which drives oxidative phosphorylation. The respiratory chain contains 3 multisubunit complexes succinate dehydrogenase (complex II, CII), ubiquinol-cytochrome c oxidoreductase (cytochrome b-c1 complex, complex III, CIII) and cytochrome c oxidase (complex IV, CIV), that cooperate to transfer electrons derived from NADH and succinate to molecular oxygen, creating an electrochemical gradient over the inner membrane that drives transmembrane transport and the ATP synthase. Cytochrome c oxidase is the component of the respiratory chain that catalyzes the reduction of oxygen to water. Electrons originating from reduced cytochrome c in the intermembrane space (IMS) are transferred via the dinuclear copper A center (CU(A)) of subunit 2 and heme A of subunit 1 to the active site in subunit 1, a binuclear center (BNC) formed by heme A3 and copper B (CU(B)). The BNC reduces molecular oxygen to 2 water molecules using 4 electrons from cytochrome c in the IMS and 4 protons from the mitochondrial matrix. The polypeptide is Cytochrome c oxidase subunit 2 (MT-CO2) (Lemniscomys barbarus (Barbary striped grass mouse)).